Reading from the N-terminus, the 199-residue chain is Early nodulin-like protein 3 (199 aa).

Positions 1–23 are cleaved as a signal peptide; sequence MGLVMRFDLYLMFVMLMGLGFTI. The Phytocyanin domain occupies 27–128; the sequence is YKFYVGGKDG…GQKLAVKVLS (102 aa). N-linked (GlcNAc...) asparagine glycosylation is found at asparagine 57 and asparagine 83. Cysteines 82 and 116 form a disulfide. The interval 130–180 is disordered; it reads VHHSHSPRHTSPSPSPVHQELSSPGPSPGVEPSSDSNSRVPAPGPATAPNS. Low complexity predominate over residues 138-165; sequence HTSPSPSPVHQELSSPGPSPGVEPSSDS. Asparagine 179 is lipidated: GPI-anchor amidated asparagine. A propeptide spans 180 to 199 (removed in mature form); it reads SAGLVGPGMVVLVIMISSLF.

This sequence belongs to the early nodulin-like (ENODL) family. Confined to flowers.

The protein localises to the cell membrane. May act as a carbohydrate transporter. The polypeptide is Early nodulin-like protein 3 (Arabidopsis thaliana (Mouse-ear cress)).